Consider the following 153-residue polypeptide: 6,7-dimethyl-8-ribityllumazine synthase (153 aa).

5-amino-6-(D-ribitylamino)uracil is bound by residues Phe22, 56-58 (AFE), and 80-82 (AVI). Residue 85–86 (ST) coordinates (2S)-2-hydroxy-3-oxobutyl phosphate. The active-site Proton donor is His88. Position 113 (Phe113) interacts with 5-amino-6-(D-ribitylamino)uracil. Arg127 contacts (2S)-2-hydroxy-3-oxobutyl phosphate.

It belongs to the DMRL synthase family.

It carries out the reaction (2S)-2-hydroxy-3-oxobutyl phosphate + 5-amino-6-(D-ribitylamino)uracil = 6,7-dimethyl-8-(1-D-ribityl)lumazine + phosphate + 2 H2O + H(+). The protein operates within cofactor biosynthesis; riboflavin biosynthesis; riboflavin from 2-hydroxy-3-oxobutyl phosphate and 5-amino-6-(D-ribitylamino)uracil: step 1/2. Catalyzes the formation of 6,7-dimethyl-8-ribityllumazine by condensation of 5-amino-6-(D-ribitylamino)uracil with 3,4-dihydroxy-2-butanone 4-phosphate. This is the penultimate step in the biosynthesis of riboflavin. The protein is 6,7-dimethyl-8-ribityllumazine synthase of Fusobacterium nucleatum subsp. nucleatum (strain ATCC 25586 / DSM 15643 / BCRC 10681 / CIP 101130 / JCM 8532 / KCTC 2640 / LMG 13131 / VPI 4355).